The following is a 408-amino-acid chain: Neutral cholesterol ester hydrolase 1 (408 aa).

Over 1-4 (MRSS) the chain is Cytoplasmic. The helical; Signal-anchor for type II membrane protein transmembrane segment at 5 to 25 (CVLLAALLALAAYYVYIPLPS) threads the bilayer. At 26–408 (AVSDPWKLML…SYIKWLDQNL (383 aa)) the chain is on the lumenal side. Residues 113–115 (HGG) carry the Involved in the stabilization of the negatively charged intermediate by the formation of the oxyanion hole motif. Serine 191 is a catalytic residue. N-linked (GlcNAc...) asparagine glycosylation occurs at asparagine 270. Aspartate 348 is an active-site residue. The N-linked (GlcNAc...) asparagine glycan is linked to asparagine 367. Histidine 378 is a catalytic residue. Residue asparagine 389 is glycosylated (N-linked (GlcNAc...) asparagine).

It belongs to the 'GDXG' lipolytic enzyme family. Post-translationally, N-glycosylated. Present in brain, heart, kidney, lung, spinal cord and testis but not liver (at protein level). Expressed in peritoneal macrophages and kidney.

The protein localises to the cell membrane. It is found in the microsome. The enzyme catalyses a 1-O-alkyl-2-acetyl-sn-glycerol + H2O = a 1-O-alkyl-sn-glycerol + acetate + H(+). It catalyses the reaction 1-O-hexadecyl-2-acetyl-sn-glycerol + H2O = 1-O-hexadecyl-sn-glycerol + acetate + H(+). The catalysed reaction is a cholesterol ester + H2O = cholesterol + a fatty acid + H(+). It carries out the reaction cholesteryl (9Z-octadecenoate) + H2O = cholesterol + (9Z)-octadecenoate + H(+). With respect to regulation, inhibited by bulky trifluoromethyl ketones. Its function is as follows. Hydrolyzes 2-acetyl monoalkylglycerol ether (1-O-alkyl-2-acetyl-sn-glycerol), the penultimate precursor of the pathway for de novo synthesis of platelet-activating factor. May be responsible for the hydrolysis of cholesterol esters (such as cholesteryl (9Z-octadecenoate)) in macrophages. Also involved in organ detoxification by hydrolyzing exogenous organophosphorus compounds. The sequence is that of Neutral cholesterol ester hydrolase 1 (Nceh1) from Mus musculus (Mouse).